Here is a 76-residue protein sequence, read N- to C-terminus: U1-cyrtautoxin-As1d (76 aa).

Disulfide bonds link cysteine 23–cysteine 37, cysteine 30–cysteine 51, cysteine 36–cysteine 66, and cysteine 69–cysteine 76.

Belongs to the neurotoxin 21 family. In terms of tissue distribution, expressed by the venom gland.

Its subcellular location is the secreted. Its function is as follows. Neurotoxin with probable ion channel impairing activity. In vivo, is both paralytic and lethal, when injected into lepidopteran larvae. The polypeptide is U1-cyrtautoxin-As1d (Apomastus schlingeri (Trap-door spider)).